The following is a 250-amino-acid chain: Alpha/beta hydrolase nvfD (250 aa).

Active-site charge relay system residues include aspartate 198 and histidine 226.

This sequence belongs to the AB hydrolase superfamily.

The protein operates within secondary metabolite biosynthesis; terpenoid biosynthesis. Its function is as follows. Alpha/beta hydrolase; part of the gene cluster that mediates the biosynthesis of novofumigatonin, a heavily oxygenated meroterpenoid containing a unique orthoester moiety. The first step of the pathway is the synthesis of 3,5-dimethylorsellinic acid (DMOA) by the polyketide synthase nvfA via condensation of one acetyl-CoA starter unit with 3 malonyl-CoA units and 2 methylations. DMOA is then converted to farnesyl-DMOA by the farnesyltransferase nvfB. Epoxydation by FAD-dependent monooxygenase nvfK, followed by a protonation-initiated cyclization catalyzed by the terpene cyclase nvfL leads to the production of asnavolin H. The short chain dehydrogenase nvfC then as a 3-OH dehydrogenase of asnovolin H to yield chemesin D. There are two branches to synthesize asnovolin A from chemesin D. In one branch, chemesin D undergoes Baeyer-Villiger oxidation by nvfH, methylation by nvfJ, and enoyl reduction by the nvfM D enoylreductase that reduces the double bond between C-5'and C-6', to form respectively asnovolin I, asnovolin K, and asnovolin A. In the other branch, the methylation precedes the Baeyer-Villiger oxidation and the enoyl reduction to yield asnovolin A via the asnovolin J intermediate. Asnovolin A is further converted to fumigatonoid A by the Fe(II)/2-oxoglutarate-dependent dioxygenase nvfI that catalyzes an endoperoxidation reaction. The alpha/beta hydrolase nvfD then acts as an epimerase that converts fumigatonoid A to its C-5' epimer, which then undergoes spontaneous or nvfD-catalyzed lactonization. The following step utilizes the ketoreductase nvfG to produce fumigatonoid B. The dioxygenase nvfE further converts fumigatonoid B into fumigatonoid C. Finally the Fe(II)/2-oxoglutarate-dependent dioxygenase nvfF catalyzes two rounds of oxidation to transform fumigatonoid C into the end product, novofumigatonin A. The protein is Alpha/beta hydrolase nvfD of Aspergillus novofumigatus (strain IBT 16806).